We begin with the raw amino-acid sequence, 128 residues long: Small ribosomal subunit protein uS9 (128 aa).

The segment at arginine 107 to arginine 128 is disordered. The segment covering lysine 113–arginine 128 has biased composition (basic residues).

Belongs to the universal ribosomal protein uS9 family.

The chain is Small ribosomal subunit protein uS9 from Parabacteroides distasonis (strain ATCC 8503 / DSM 20701 / CIP 104284 / JCM 5825 / NCTC 11152).